The chain runs to 474 residues: Probable dipeptidase B (474 aa).

Cysteine 11 is a catalytic residue.

This sequence belongs to the peptidase C69 family.

The catalysed reaction is an L-aminoacyl-L-amino acid + H2O = 2 an L-alpha-amino acid. This is Probable dipeptidase B (pepDB) from Lactococcus lactis subsp. lactis (strain IL1403) (Streptococcus lactis).